The primary structure comprises 151 residues: MRVSLDEIDRRIIKILQKDGKAPLREISKITGLAESTIHERIKKLRESGVIRKFTAIVNPEALGYSMLAFILIKVKAGKYAEVASNLVKYEEIMEVYETTGDYDMVVKIRTKNSEELNSFLDVIGSIPGVEGTHTMIVLKTHKETTELPIK.

An HTH asnC-type domain is found at 5 to 66 (LDEIDRRIIK…IVNPEALGYS (62 aa)). The segment at residues 24–43 (LREISKITGLAESTIHERIK) is a DNA-binding region (H-T-H motif). 98–104 (ETTGDYD) provides a ligand contact to L-arginine. L-lysine is bound by residues asparagine 118, aspartate 122, and 133–135 (THT). Residues aspartate 122 and 133-135 (THT) each bind L-arginine.

In terms of assembly, homodimer. Binds DNA as a dimer and an octamer.

Its activity is regulated as follows. In the famine mode, FL11 forms dimers and acts as a repressor, leading to growth arrest. In the feast mode, in the presence of high concentrations of lysine or arginine, four dimers assemble into an octamer and cover the fl11 and lysine biosynthesis promoters. This leads to the inhibition of fl11 expression and lysine biosynthesis, decrease of the FL11 concentration in the cell, derepression of the target genes and activation of the metabolism. Its function is as follows. DNA-binding protein involved in the repression of transcription of a large number of genes, thereby arresting growth, in response to environmental changes. This is HTH-type transcriptional regulator FL11 from Pyrococcus abyssi (strain GE5 / Orsay).